We begin with the raw amino-acid sequence, 924 residues long: Translation initiation factor IF-2 (924 aa).

The tract at residues 118 to 325 (PSTAHREELA…QAPVVGGVRL (208 aa)) is disordered. 2 stretches are compositionally biased toward pro residues: residues 150-173 (APHP…PGGR) and 192-201 (IPRPPAPRPS). Low complexity predominate over residues 202 to 212 (ASPSSMSPRPG). Positions 229–295 (RPGGGRPGAP…GAAGAFGRPG (67 aa)) are enriched in gly residues. Over residues 299 to 308 (RRGRKSKRQK) the composition is skewed to basic residues. Residues 420–591 (VRPPVVTVMG…AVLLTADAAL (172 aa)) form the tr-type G domain. Residues 429–436 (GHVDHGKT) are G1. Residue 429-436 (GHVDHGKT) participates in GTP binding. The tract at residues 454–458 (GITQH) is G2. The interval 479–482 (DTPG) is G3. Residues 479 to 483 (DTPGH) and 533 to 536 (NKID) each bind GTP. The segment at 533 to 536 (NKID) is G4. Residues 569-571 (SAK) form a G5 region.

This sequence belongs to the TRAFAC class translation factor GTPase superfamily. Classic translation factor GTPase family. IF-2 subfamily.

Its subcellular location is the cytoplasm. Functionally, one of the essential components for the initiation of protein synthesis. Protects formylmethionyl-tRNA from spontaneous hydrolysis and promotes its binding to the 30S ribosomal subunits. Also involved in the hydrolysis of GTP during the formation of the 70S ribosomal complex. This chain is Translation initiation factor IF-2, found in Mycobacterium leprae (strain Br4923).